Reading from the N-terminus, the 912-residue chain is Protein translocase subunit SecA (912 aa).

Residues Gln-86, 104–108, and Asp-494 each bind ATP; that span reads GEGKT. The segment at 860–912 is disordered; sequence EAPEKPAQLQYTAPGEDGASQTRVEGRSSGRSGNPAKAAQDGARKPAPKKKKR.

This sequence belongs to the SecA family. In terms of assembly, monomer and homodimer. Part of the essential Sec protein translocation apparatus which comprises SecA, SecYEG and auxiliary proteins SecDF. Other proteins may also be involved.

It is found in the cell membrane. The protein resides in the cytoplasm. The enzyme catalyses ATP + H2O + cellular proteinSide 1 = ADP + phosphate + cellular proteinSide 2.. Part of the Sec protein translocase complex. Interacts with the SecYEG preprotein conducting channel. Has a central role in coupling the hydrolysis of ATP to the transfer of proteins into and across the cell membrane, serving as an ATP-driven molecular motor driving the stepwise translocation of polypeptide chains across the membrane. The chain is Protein translocase subunit SecA from Arthrobacter sp. (strain FB24).